The sequence spans 615 residues: DNA mismatch repair protein MutL (615 aa).

The interval 363–397 (FAEPAVREPVAPRYTPAPASGSRPAAPWPNAQPGY) is disordered. Residues 378–391 (PAPASGSRPAAPWP) are compositionally biased toward low complexity.

The protein belongs to the DNA mismatch repair MutL/HexB family.

This protein is involved in the repair of mismatches in DNA. It is required for dam-dependent methyl-directed DNA mismatch repair. May act as a 'molecular matchmaker', a protein that promotes the formation of a stable complex between two or more DNA-binding proteins in an ATP-dependent manner without itself being part of a final effector complex. The chain is DNA mismatch repair protein MutL from Escherichia coli O157:H7 (strain EC4115 / EHEC).